Here is an 81-residue protein sequence, read N- to C-terminus: Defensin-like protein 313 (81 aa).

The first 32 residues, 1-32 (MESKRSSSSPLLILITTIMIIFIISGPKSVDA), serve as a signal peptide directing secretion. Intrachain disulfides connect C34–C63, C45–C74, and C49–C76.

The protein belongs to the DEFL family.

Its subcellular location is the secreted. The sequence is that of Defensin-like protein 313 from Arabidopsis thaliana (Mouse-ear cress).